A 134-amino-acid chain; its full sequence is Phosphoribosyl-AMP cyclohydrolase (134 aa).

Asp-80 lines the Mg(2+) pocket. Cys-81 is a binding site for Zn(2+). Mg(2+)-binding residues include Asp-82 and Asp-84. Cys-98 and Cys-105 together coordinate Zn(2+).

This sequence belongs to the PRA-CH family. In terms of assembly, homodimer. The cofactor is Mg(2+). Requires Zn(2+) as cofactor.

It localises to the cytoplasm. The enzyme catalyses 1-(5-phospho-beta-D-ribosyl)-5'-AMP + H2O = 1-(5-phospho-beta-D-ribosyl)-5-[(5-phospho-beta-D-ribosylamino)methylideneamino]imidazole-4-carboxamide. It functions in the pathway amino-acid biosynthesis; L-histidine biosynthesis; L-histidine from 5-phospho-alpha-D-ribose 1-diphosphate: step 3/9. Its function is as follows. Catalyzes the hydrolysis of the adenine ring of phosphoribosyl-AMP. The protein is Phosphoribosyl-AMP cyclohydrolase of Janthinobacterium sp. (strain Marseille) (Minibacterium massiliensis).